A 347-amino-acid chain; its full sequence is Ferrochelatase (347 aa).

Cys158 serves as a coordination point for [2Fe-2S] cluster. Positions 193 and 272 each coordinate Fe cation. The [2Fe-2S] cluster site is built by Cys332, Cys339, and Cys341.

The protein belongs to the ferrochelatase family. In terms of assembly, homodimer. [2Fe-2S] cluster is required as a cofactor.

It is found in the cytoplasm. It carries out the reaction heme b + 2 H(+) = protoporphyrin IX + Fe(2+). The protein operates within porphyrin-containing compound metabolism; protoheme biosynthesis; protoheme from protoporphyrin-IX: step 1/1. In terms of biological role, catalyzes the ferrous insertion into protoporphyrin IX. This Caulobacter vibrioides (strain ATCC 19089 / CIP 103742 / CB 15) (Caulobacter crescentus) protein is Ferrochelatase.